A 349-amino-acid polypeptide reads, in one-letter code: Bifunctional nitrilase/nitrile hydratase NIT4A (349 aa).

One can recognise a CN hydrolase domain in the interval 29–301 (VRATVVQAST…EALISADLDL (273 aa)). Glu69 serves as the catalytic Proton acceptor. The active site involves Lys156. Cys190 (nucleophile) is an active-site residue.

This sequence belongs to the carbon-nitrogen hydrolase superfamily. Nitrilase family. As to expression, ubiquitous.

The catalysed reaction is L-asparagine = 3-cyano-L-alanine + H2O. It carries out the reaction 3-cyano-L-alanine + 2 H2O = L-aspartate + NH4(+). In terms of biological role, involved in the cyanide detoxification pathway. Has nitrilase and nitrile-hydratase activity in the ratio 4.0:1, producing both asparagine and aspartic acid from beta-cyano-L-alanine (Ala(CN)). Can also use 3-phenylpropionitrile as substrate, but not indole-3-acetonitrile. This is Bifunctional nitrilase/nitrile hydratase NIT4A (NIT4A) from Lupinus angustifolius (Narrow-leaved blue lupine).